Here is a 65-residue protein sequence, read N- to C-terminus: Putative potassium channel toxin Ts21 (65 aa).

A signal peptide spans 1–25; that stretch reads MNKVYLVAILVLSVLLVANVSPIEG. Intrachain disulfides connect cysteine 31-cysteine 53, cysteine 38-cysteine 61, and cysteine 42-cysteine 63.

It belongs to the short scorpion toxin superfamily. Potassium channel inhibitor family. Alpha-KTx 11 subfamily. Expressed by the venom gland.

It is found in the secreted. Its function is as follows. This recombinant toxin inhibits the mammalian voltage-gated potassium channels Kv1.3/KCNA3 in vitro with an IC(50) of 26.40 nM. The polypeptide is Putative potassium channel toxin Ts21 (Tityus serrulatus (Brazilian scorpion)).